Here is a 273-residue protein sequence, read N- to C-terminus: Progestin and adipoQ receptor family member 4 (273 aa).

6 helical membrane passes run 52 to 72 (IYTH…TMPW), 79 to 99 (GWLG…SVLY), 115 to 135 (LLAL…LPII), 147 to 167 (PAAL…ALTA), 185 to 205 (LLVF…SLPC), and 245 to 265 (LLSV…LLWA).

It belongs to the ADIPOR family. As to quaternary structure, interacts with CERS2 and CERS5; the interaction regulates CERS2 and CERS5 stabilities and activities and is inhibited in presence of ceramides. In terms of tissue distribution, relatively widely expressed in a range of tissues. Expressed in subcutaneous white adipose tissue.

The protein resides in the golgi apparatus membrane. Its function is as follows. Plays a role in maintaining adipose tissue function through the regulation of ceramide levels. Mediates the stability of ceramide synthetases, CERS2 and CERS5, and their activities. This Homo sapiens (Human) protein is Progestin and adipoQ receptor family member 4.